We begin with the raw amino-acid sequence, 515 residues long: MSGYKPVAIPTYPKLGEKITQDTLYWKRYKTPVQIKEFGAVTKIHFSPVQPCTYAVTSSTRIHLYGQYSQEPIKTFSRFKDTAYCGTFRGDGKLLAAGCEDSVVQLFDISGKAALRQFSGHSKAVHFVDFTADKYRIVSGSDDYTSRLWDIPNGVEITSYNEHTDYIRCGCTSALNNDLFATGSYDHTIKIFDGRTDKSVMSMDHGQPVESVLLFPSGGLLVSAGGRYVKVWDILKGGQLLVSLRNHHKTVTSLCLSSSGQRLLSASLDRHVKVYSTMNYKVVHSFDYAASILSLALAPDDQMIVVGMTNGVLNIKHRKPEERKQLQSTTKRHPRYRVFVRGKDYMPKQDDIFISKPVIAHLKKYDKLLKGFHMTEALDTVLQPQIRNQRPEVTVAVMNELKRRGTLKNALAGRNEKQLSDLLIFLLKHLVNPQFVPILLNVAEHIIDIYSPVVGQSSVIYKQFIRLQEVLEKEINYQEELLKMLGMMDTLFATMTTKKESPWEEPKPILPLSSQ.

WD repeat units lie at residues 36–75 (KEFGAVTKIHFSPVQPCTYAVTSSTRIHLYGQYSQEPIKT), 78–117 (RFKDTAYCGTFRGDGKLLAAGCEDSVVQLFDISGKAALRQ), 120–159 (GHSKAVHFVDFTADKYRIVSGSDDYTSRLWDIPNGVEITS), 162–202 (EHTD…SVMS), 204–242 (DHGQPVESVLLFPSGGLLVSAGGRYVKVWDILKGGQLLV), 246–285 (NHHKTVTSLCLSSSGQRLLSASLDRHVKVYSTMNYKVVHS), and 287–326 (DYAASILSLALAPDDQMIVVGMTNGVLNIKHRKPEERKQL).

Part of the small subunit (SSU) processome, composed of more than 70 proteins and the RNA chaperone small nucleolar RNA (snoRNA) U3. May be a component of the proposed t-UTP subcomplex of the ribosomal small subunit (SSU) processome.

It is found in the nucleus. The protein resides in the nucleolus. Its function is as follows. Ribosome biogenesis factor. Involved in nucleolar processing of pre-18S ribosomal RNA. Required for optimal pre-ribosomal RNA transcription by RNA polymerase I. Part of the small subunit (SSU) processome, first precursor of the small eukaryotic ribosomal subunit. During the assembly of the SSU processome in the nucleolus, many ribosome biogenesis factors, an RNA chaperone and ribosomal proteins associate with the nascent pre-rRNA and work in concert to generate RNA folding, modifications, rearrangements and cleavage as well as targeted degradation of pre-ribosomal RNA by the RNA exosome. The sequence is that of U3 small nucleolar RNA-associated protein 15 homolog (utp15) from Xenopus tropicalis (Western clawed frog).